The sequence spans 493 residues: Aminotransferase swnA (493 aa).

It belongs to the class-I pyridoxal-phosphate-dependent aminotransferase family. It depends on pyridoxal 5'-phosphate as a cofactor.

It functions in the pathway mycotoxin biosynthesis. In terms of biological role, aminotransferase; part of the gene cluster that mediates the biosynthesis of swainsonine (SW), a cytotoxic fungal alkaloid and a potential cancer therapy drug. Swainsonine production occurs via a multibranched pathway and is dispensable for fungal colonization of plants and infection of insect hosts. The first step of swainsonine biosynthesis is the production of the precursor pipecolic acid (PA) via conversion of L-lysine (Lys) to 1-piperideine-6-carboxylate (P6C) by the aminotransferase swnA, the latter being further reduced to PA by the reductase swnR. The PKS-NRPS hybrid synthetase swnK uptakes and condensates PA and malonyl-CoA with and without skipping of the ketoreductase (KR) domain in order to produce 3 intermediates, 1-oxoindolizidine, (1S)-1-hydroxyindolizin, and (1R)-1-hydroxyindolizine; with the transisomer (1S)-1-hydroxyindolizin being predominant. The terminal thioester reductase (TE) domain of swnK is involved in reduction of the thioester bond to release the intermediate aldehydes. The oxidoreductase swnN could contribute to the reduction of 1-oxoindolizidine to (1S)-1-hydroxyindolizin and (1R)-1-hydroxyindolizine, contributing to the major route of SW production. The dioxygenase swnH2 would be responsible for the oxidization of (1R)-1-hydroxyindolizine into (1R,2S)-1,2-dihydroxyindolizine and of (1S)-1-hydroxyindolizin to yield both (1R,2S)-1,2-dihydroxyindolizine and (1S,2S)-1,2-dihydroxyindolizine. The dioxygenase swnH1 then performs the conversion of the 1,2-dihydroxyindolizine epimers to SW. The polypeptide is Aminotransferase swnA (Arthroderma benhamiae (strain ATCC MYA-4681 / CBS 112371) (Trichophyton mentagrophytes)).